We begin with the raw amino-acid sequence, 173 residues long: Alpha-crystallin A chain (173 aa).

Met1 carries the post-translational modification N-acetylmethionine. Residues 1–63 (MDIAIQHPWF…RTVLDSGISE (63 aa)) form a required for complex formation with BFSP1 and BFSP2 region. Gln6 carries the post-translational modification Deamidated glutamine; partial. A Phosphoserine modification is found at Ser45. At Gln50 the chain carries Deamidated glutamine; partial. The 111-residue stretch at 52-162 (LFRTVLDSGI…GHSERAIPVS (111 aa)) folds into the sHSP domain. The residue at position 70 (Lys70) is an N6-acetyllysine. Gln90 is subject to Deamidated glutamine; partial. Lys99 carries the post-translational modification N6-acetyllysine. Zn(2+) is bound at residue His100. Asn101 bears the Deamidated asparagine; partial mark. 2 residues coordinate Zn(2+): Glu102 and His107. Ser122 is modified (phosphoserine). Residue Asn123 is modified to Deamidated asparagine; partial. The segment at 144-173 (PKVPSGVDAGHSERAIPVSREEKPSSAPSS) is disordered. Positions 153-167 (GHSERAIPVSREEKP) are enriched in basic and acidic residues. Residue His154 coordinates Zn(2+). Residue Ser162 is glycosylated (O-linked (GlcNAc) serine).

This sequence belongs to the small heat shock protein (HSP20) family. Heteromer composed of three CRYAA and one CRYAB subunits. Inter-subunit bridging via zinc ions enhances stability, which is crucial as there is no protein turn over in the lens. Can also form homodimers and homotetramers (dimers of dimers) which serve as the building blocks of homooligomers. Within homooligomers, the zinc-binding motif is created from residues of 3 different molecules. His-100 and Glu-102 from one molecule are ligands of the zinc ion, and His-107 and His-154 residues from additional molecules complete the site with tetrahedral coordination geometry. Part of a complex required for lens intermediate filament formation composed of BFSP1, BFSP2 and CRYAA. Acetylation at Lys-70 may increase chaperone activity. In terms of processing, undergoes age-dependent proteolytical cleavage at the C-terminus.

Its subcellular location is the cytoplasm. It is found in the nucleus. Contributes to the transparency and refractive index of the lens. Acts as a chaperone, preventing aggregation of various proteins under a wide range of stress conditions. Required for the correct formation of lens intermediate filaments as part of a complex composed of BFSP1, BFSP2 and CRYAA. The polypeptide is Alpha-crystallin A chain (CRYAA) (Pteropus poliocephalus (Grey-headed flying fox)).